Here is a 564-residue protein sequence, read N- to C-terminus: Proline--tRNA ligase (564 aa).

The protein belongs to the class-II aminoacyl-tRNA synthetase family. ProS type 1 subfamily. In terms of assembly, homodimer.

It is found in the cytoplasm. The enzyme catalyses tRNA(Pro) + L-proline + ATP = L-prolyl-tRNA(Pro) + AMP + diphosphate. In terms of biological role, catalyzes the attachment of proline to tRNA(Pro) in a two-step reaction: proline is first activated by ATP to form Pro-AMP and then transferred to the acceptor end of tRNA(Pro). As ProRS can inadvertently accommodate and process non-cognate amino acids such as alanine and cysteine, to avoid such errors it has two additional distinct editing activities against alanine. One activity is designated as 'pretransfer' editing and involves the tRNA(Pro)-independent hydrolysis of activated Ala-AMP. The other activity is designated 'posttransfer' editing and involves deacylation of mischarged Ala-tRNA(Pro). The misacylated Cys-tRNA(Pro) is not edited by ProRS. This is Proline--tRNA ligase from Xylella fastidiosa (strain Temecula1 / ATCC 700964).